The chain runs to 459 residues: Interleukin-7 receptor subunit alpha (459 aa).

An N-terminal signal peptide occupies residues 1–20; that stretch reads MTILGTTFGMVFSLLQVVSG. Residues 21-239 are Extracellular-facing; sequence ESGYAQNGDL…EINNSSGEMD (219 aa). The cysteines at positions 42 and 57 are disulfide-linked. 2 N-linked (GlcNAc...) asparagine glycosylation sites follow: asparagine 49 and asparagine 65. 2 disulfides stabilise this stretch: cysteine 74/cysteine 82 and cysteine 108/cysteine 118. The 101-residue stretch at 131–231 folds into the Fibronectin type-III domain; that stretch reads APFDLSVVYR…PSYYFRTPEI (101 aa). N-linked (GlcNAc...) asparagine glycans are attached at residues asparagine 151 and asparagine 182. A WSXWS motif motif is present at residues 217 to 221; the sequence is WSEWS. N-linked (GlcNAc...) asparagine glycans are attached at residues asparagine 232 and asparagine 233. The chain crosses the membrane as a helical span at residues 240–264; sequence PILLTISILSFFSVALLVILACVLW. Topologically, residues 265–459 are cytoplasmic; that stretch reads KKRIKPIVWP…VTMSSFYQNQ (195 aa). Residues 272–280 carry the Box 1 motif motif; sequence VWPSLPDHK. Phosphothreonine; by PKC is present on threonine 282.

The protein belongs to the type I cytokine receptor family. Type 4 subfamily. The IL7 receptor is a heterodimer of IL7R and IL2RG. The TSLP receptor is a heterodimer of CRLF2 and IL7R. Interacts with CD53. N-glycosylated IL-7Ralpha binds IL7 300-fold more tightly than the unglycosylated form. Post-translationally, ubiquitinated by MARCHF8; leading to lysosomal degradation.

It is found in the cell membrane. The protein localises to the secreted. Its function is as follows. Receptor for interleukin-7. Also acts as a receptor for thymic stromal lymphopoietin (TSLP). The sequence is that of Interleukin-7 receptor subunit alpha (IL7R) from Homo sapiens (Human).